Consider the following 336-residue polypeptide: Glyceraldehyde-3-phosphate dehydrogenase (336 aa).

Residues 12–13 (RI), Asp34, Arg78, and Thr121 contribute to the NAD(+) site. D-glyceraldehyde 3-phosphate contacts are provided by residues 151 to 153 (SCT), Thr182, Arg199, 212 to 213 (TG), and Arg235. The Nucleophile role is filled by Cys152. Asn316 is an NAD(+) binding site.

Belongs to the glyceraldehyde-3-phosphate dehydrogenase family. In terms of assembly, homotetramer.

It localises to the cytoplasm. The enzyme catalyses D-glyceraldehyde 3-phosphate + phosphate + NAD(+) = (2R)-3-phospho-glyceroyl phosphate + NADH + H(+). It functions in the pathway carbohydrate degradation; glycolysis; pyruvate from D-glyceraldehyde 3-phosphate: step 1/5. Its function is as follows. Catalyzes the oxidative phosphorylation of glyceraldehyde 3-phosphate (G3P) to 1,3-bisphosphoglycerate (BPG) using the cofactor NAD. The first reaction step involves the formation of a hemiacetal intermediate between G3P and a cysteine residue, and this hemiacetal intermediate is then oxidized to a thioester, with concomitant reduction of NAD to NADH. The reduced NADH is then exchanged with the second NAD, and the thioester is attacked by a nucleophilic inorganic phosphate to produce BPG. This Streptococcus pyogenes serotype M3 (strain ATCC BAA-595 / MGAS315) protein is Glyceraldehyde-3-phosphate dehydrogenase (gap).